A 340-amino-acid polypeptide reads, in one-letter code: Ferrochelatase (340 aa).

Residues His-218 and Glu-298 each coordinate Fe cation.

The protein belongs to the ferrochelatase family.

The protein resides in the cytoplasm. It carries out the reaction heme b + 2 H(+) = protoporphyrin IX + Fe(2+). The protein operates within porphyrin-containing compound metabolism; protoheme biosynthesis; protoheme from protoporphyrin-IX: step 1/1. Its function is as follows. Catalyzes the ferrous insertion into protoporphyrin IX. This is Ferrochelatase from Wolbachia sp. subsp. Brugia malayi (strain TRS).